We begin with the raw amino-acid sequence, 212 residues long: Uridine kinase (212 aa).

12-19 (GGSGGGKT) is a binding site for ATP.

The protein belongs to the uridine kinase family.

The protein resides in the cytoplasm. It catalyses the reaction uridine + ATP = UMP + ADP + H(+). The catalysed reaction is cytidine + ATP = CMP + ADP + H(+). It participates in pyrimidine metabolism; CTP biosynthesis via salvage pathway; CTP from cytidine: step 1/3. Its pathway is pyrimidine metabolism; UMP biosynthesis via salvage pathway; UMP from uridine: step 1/1. This Streptococcus pneumoniae serotype 2 (strain D39 / NCTC 7466) protein is Uridine kinase.